A 287-amino-acid chain; its full sequence is Putative esterase/lipase HI_0193 (287 aa).

An AB hydrolase-1 domain is found at 47 to 273; sequence PVLIFIHGLF…SGHWVHAEKP (227 aa). Catalysis depends on residues Ser119 and His266.

Belongs to the DmpD/TodF/XylF esterase family.

This is Putative esterase/lipase HI_0193 from Haemophilus influenzae (strain ATCC 51907 / DSM 11121 / KW20 / Rd).